The sequence spans 292 residues: Phosphatidylserine decarboxylase proenzyme (292 aa).

Residues aspartate 92, histidine 149, and serine 255 each act as charge relay system; for autoendoproteolytic cleavage activity in the active site. The active-site Schiff-base intermediate with substrate; via pyruvic acid; for decarboxylase activity is the serine 255. A Pyruvic acid (Ser); by autocatalysis modification is found at serine 255.

Belongs to the phosphatidylserine decarboxylase family. PSD-B subfamily. Prokaryotic type I sub-subfamily. In terms of assembly, heterodimer of a large membrane-associated beta subunit and a small pyruvoyl-containing alpha subunit. It depends on pyruvate as a cofactor. Post-translationally, is synthesized initially as an inactive proenzyme. Formation of the active enzyme involves a self-maturation process in which the active site pyruvoyl group is generated from an internal serine residue via an autocatalytic post-translational modification. Two non-identical subunits are generated from the proenzyme in this reaction, and the pyruvate is formed at the N-terminus of the alpha chain, which is derived from the carboxyl end of the proenzyme. The autoendoproteolytic cleavage occurs by a canonical serine protease mechanism, in which the side chain hydroxyl group of the serine supplies its oxygen atom to form the C-terminus of the beta chain, while the remainder of the serine residue undergoes an oxidative deamination to produce ammonia and the pyruvoyl prosthetic group on the alpha chain. During this reaction, the Ser that is part of the protease active site of the proenzyme becomes the pyruvoyl prosthetic group, which constitutes an essential element of the active site of the mature decarboxylase.

It is found in the cell membrane. It carries out the reaction a 1,2-diacyl-sn-glycero-3-phospho-L-serine + H(+) = a 1,2-diacyl-sn-glycero-3-phosphoethanolamine + CO2. The protein operates within phospholipid metabolism; phosphatidylethanolamine biosynthesis; phosphatidylethanolamine from CDP-diacylglycerol: step 2/2. Catalyzes the formation of phosphatidylethanolamine (PtdEtn) from phosphatidylserine (PtdSer). In Idiomarina loihiensis (strain ATCC BAA-735 / DSM 15497 / L2-TR), this protein is Phosphatidylserine decarboxylase proenzyme.